Here is a 610-residue protein sequence, read N- to C-terminus: Aspercryptin biosynthesis cluster-specific transcription regulator atnN (610 aa).

The span at 1-26 (MAPKDSQVSASNEMTGNPPSSVQGRS) shows a compositional bias: polar residues. A disordered region spans residues 1 to 27 (MAPKDSQVSASNEMTGNPPSSVQGRSR). The zn(2)-C6 fungal-type DNA-binding region spans 30-57 (CITCRIRRVKCDEERPHCRRCQSTGRKC). Disordered stretches follow at residues 61–81 (TPLT…KAGS) and 427–493 (AGST…LPRP). 2 stretches are compositionally biased toward low complexity: residues 66–79 (QQPK…AAKA) and 437–474 (SRAG…TPTP).

Its subcellular location is the nucleus. In terms of biological role, transcription factor that positively regulates the cluster that mediate the production of aspercryptins, linear lipopeptides built from six amino acids including 2 highly unusual and nonproteogenic amino acids, 2-amino-octanoic acid (2aoa) and 2-amino-dodecanol (2adol). The protein is Aspercryptin biosynthesis cluster-specific transcription regulator atnN of Emericella nidulans (strain FGSC A4 / ATCC 38163 / CBS 112.46 / NRRL 194 / M139) (Aspergillus nidulans).